Reading from the N-terminus, the 145-residue chain is UPF0201 protein Saci_1285 (145 aa).

This sequence belongs to the UPF0201 family.

This is UPF0201 protein Saci_1285 from Sulfolobus acidocaldarius (strain ATCC 33909 / DSM 639 / JCM 8929 / NBRC 15157 / NCIMB 11770).